The following is a 141-amino-acid chain: Putative pre-16S rRNA nuclease (141 aa).

Belongs to the YqgF nuclease family.

It is found in the cytoplasm. In terms of biological role, could be a nuclease involved in processing of the 5'-end of pre-16S rRNA. This chain is Putative pre-16S rRNA nuclease, found in Cupriavidus pinatubonensis (strain JMP 134 / LMG 1197) (Cupriavidus necator (strain JMP 134)).